A 156-amino-acid chain; its full sequence is Snaclec A10 (156 aa).

A signal peptide spans 1–23 (MGRSISVSFGLLVVFLSLSGIGA). 3 cysteine pairs are disulfide-bonded: cysteine 27/cysteine 38, cysteine 55/cysteine 154, and cysteine 129/cysteine 146. The region spanning 34 to 155 (YDQHCYQAVD…CGQPYRFTCE (122 aa)) is the C-type lectin domain.

This sequence belongs to the snaclec family. As to quaternary structure, heterodimer; disulfide-linked. As to expression, expressed by the venom gland.

The protein resides in the secreted. Functionally, interferes with one step of hemostasis (modulation of platelet aggregation, or coagulation cascade, for example). The protein is Snaclec A10 of Macrovipera lebetinus (Levantine viper).